The sequence spans 2528 residues: Highly reducing polyketide synthase pspA (2528 aa).

The disordered stretch occupies residues 1-53 (MLAQDVEFVDLPPPEATAGAATTDNETSSFNSNPVPTPSEASSIGPPHQLPVP). The span at 24-42 (DNETSSFNSNPVPTPSEAS) shows a compositional bias: polar residues. Residues 63-483 (VEPMAICGMA…GSNAHVLLGS (421 aa)) form the Ketosynthase family 3 (KS3) domain. Active-site for beta-ketoacyl synthase activity residues include C235, H371, and H406. A malonyl-CoA:ACP transacylase (MAT) domain region spans residues 590–909 (TFTGQGAQWA…HKDLLKAVGE (320 aa)). The tract at residues 961–1089 (HDILGSRVLE…GQVCAGSDRE (129 aa)) is N-terminal hotdog fold. A dehydratase (DH) domain region spans residues 961–1230 (HDILGSRVLE…VSNGHVTIDI (270 aa)). A PKS/mFAS DH domain is found at 961–1244 (HDILGSRVLE…MSAIGDAADA (284 aa)). The Proton acceptor; for dehydratase activity role is filled by H993. Residues 1099–1244 (PRQLSRRGWY…MSAIGDAADA (146 aa)) are C-terminal hotdog fold. Residue D1160 is the Proton donor; for dehydratase activity of the active site. The tract at residues 1409-1587 (VFLELLAHRK…GFSGINLVSH (179 aa)) is methyltransferase (CMet) domain. An enoyl reductase (ER) (ER) domain region spans residues 1803–2119 (GLVDTLCWKS…RGQHIGKIVI (317 aa)). The tract at residues 2143 to 2322 (RAYLFVGGLG…ASTVNIGVIQ (180 aa)) is ketoreductase (KR) domain. The region spanning 2447–2525 (ETAELLAGEI…DLGVLAQKKL (79 aa)) is the Carrier domain. Residue S2485 is modified to O-(pantetheine 4'-phosphoryl)serine.

The catalysed reaction is 9 malonyl-CoA + acetyl-CoA + S-adenosyl-L-methionine + 13 NADPH + 20 H(+) = soppiline A + S-adenosyl-L-homocysteine + 9 CO2 + 13 NADP(+) + 10 CoA + 7 H2O. It participates in secondary metabolite biosynthesis. Its function is as follows. Highly reducing polyketide synthase; part of the gene cluster that mediates the biosynthesis of the alkylresorcinols called soppilines. The biosynthesis starts with the HR-PKS pspA-catalyzed carbon chain assembly through nine chain elongation cycles, using acetyl CoA and malonyl CoA as a starter and extender units, respectively, to produce the polyketide soppiline A. In the first round, the KR, DH, and CMeT domains work to produce 2-methyl-2-butenyl thioester. In rounds 2 to 5, the KR, DH, and ER domains fully catalyze the reduction of the elongated beta-ketothioester, resulting in the insertion of eight methylene units. The unusual Z,E,Z-triene motif is likely constructed during rounds 6 to 8. Typically, the DH domain introduces a double bond at an alpha,beta-position of an elongated polyketide chain, with the dehydration of a beta-hydroxy group. The last extension cycle would be carried out with L-oriented beta-ketoreduction by the KR domain to produce beta-hydroxy carboxylic acid soppiline A. The type III PKS pspB intercepts the elongated polyketide chain at round 8 from the HR-PKS pspA, followed by a tri-keto extension and decarboxylative aldol cyclization to produce 1,3,5-trisubstituted alkylresorcinol soppiline B. Subsequently, the cytochrome P450 monooxygenase pspC catalyzes three-step oxidations at the C-4 methyl group to carboxylic acid to yield soppiline C. The chain is Highly reducing polyketide synthase pspA from Penicillium soppii.